The following is a 287-amino-acid chain: (S)-phenoxypropionate/alpha-ketoglutarate-dioxygenase (287 aa).

Positions 102 and 104 each coordinate Fe cation. 2-oxoglutarate contacts are provided by Thr-129 and Trp-242. A Fe cation-binding site is contributed by His-257. Arg-268 contacts 2-oxoglutarate.

The protein belongs to the TfdA dioxygenase family. As to quaternary structure, monomer. Fe cation is required as a cofactor. It depends on L-ascorbate as a cofactor.

The enzyme catalyses (S)-2-(4-chloro-2-methylphenoxy)propanoate + 2-oxoglutarate + O2 = 2-methyl-4-chlorophenol + pyruvate + succinate + CO2. It catalyses the reaction (S)-(2,4-dichlorophenoxy)propanoate + 2-oxoglutarate + O2 = 2,4-dichlorophenol + pyruvate + succinate + CO2. Its pathway is xenobiotic degradation; 2-(2,4-dichlorophenoxy)propanoate degradation. In terms of biological role, involved in the degradation of the phenoxypropionate herbicides. Catalyzes the enantiospecific cleavage of the ether bond in the herbicid S-dichlorprop ((S)-2-(2,4-dichlorophenoxy)propionate)(S-2,4-DP) and S-mecoprop ((S)-2-(4-chloro-2-methylphenoxy)propionate)(S-2,4-MCPP). It can also accept (RS)-2-(4-chloro-2-methylphenoxy)propionate ((RS)-2,4-MCPP) and phenoxyacetate derivatives such as 2,4-dichlorophenoxyacetate (2,4-D), however it can only accept 2-oxoglutarate as oxygen acceptor. The chain is (S)-phenoxypropionate/alpha-ketoglutarate-dioxygenase from Sphingobium herbicidovorans (strain ATCC 700291 / DSM 11019 / CCUG 56400 / KCTC 2939 / LMG 18315 / NBRC 16415 / MH) (Sphingomonas herbicidovorans).